Consider the following 407-residue polypeptide: 1-deoxy-D-xylulose 5-phosphate reductoisomerase (407 aa).

NADPH-binding residues include Thr25, Gly26, Ser27, Ile28, Asn53, and Asn136. Lys137 is a binding site for 1-deoxy-D-xylulose 5-phosphate. Residue Glu138 participates in NADPH binding. Position 162 (Asp162) interacts with Mn(2+). 1-deoxy-D-xylulose 5-phosphate contacts are provided by Ser163, Glu164, Ser188, and His211. Mn(2+) is bound at residue Glu164. Gly217 provides a ligand contact to NADPH. Residues Ser224, Asn229, Lys230, and Glu233 each coordinate 1-deoxy-D-xylulose 5-phosphate. A Mn(2+)-binding site is contributed by Glu233.

This sequence belongs to the DXR family. Mg(2+) serves as cofactor. Requires Mn(2+) as cofactor.

The catalysed reaction is 2-C-methyl-D-erythritol 4-phosphate + NADP(+) = 1-deoxy-D-xylulose 5-phosphate + NADPH + H(+). The protein operates within isoprenoid biosynthesis; isopentenyl diphosphate biosynthesis via DXP pathway; isopentenyl diphosphate from 1-deoxy-D-xylulose 5-phosphate: step 1/6. Its function is as follows. Catalyzes the NADPH-dependent rearrangement and reduction of 1-deoxy-D-xylulose-5-phosphate (DXP) to 2-C-methyl-D-erythritol 4-phosphate (MEP). The sequence is that of 1-deoxy-D-xylulose 5-phosphate reductoisomerase from Bradyrhizobium sp. (strain ORS 278).